We begin with the raw amino-acid sequence, 616 residues long: Protein SpAN (616 aa).

A signal peptide spans 1–16 (MKLVLLLAGFAALAKC). Positions 17 to 93 (SLAAPAGVQK…DQKAGRKKRK (77 aa)) are cleaved as a propeptide — activation peptide. Residues 30-67 (METSAPEKPSEATTLGLLKTPKPEPKDEEPSPGAFQGD) form a disordered region. The region spanning 93 to 294 (KATIYESQRW…ELANRIYECD (202 aa)) is the Peptidase M12A domain. 6 cysteine pairs are disulfide-bonded: Cys-134–Cys-293, Cys-162–Cys-182, Cys-299–Cys-317, Cys-319–Cys-328, Cys-340–Cys-366, and Cys-393–Cys-413. His-190 is a binding site for Zn(2+). Glu-191 is a catalytic residue. Residues His-194 and His-200 each coordinate Zn(2+). The region spanning 289 to 329 (RIYECDDVEDCSNADECLNGGYHDADCDCVCPSSYSGDLCQ) is the EGF-like domain. The CUB 1 domain occupies 340 to 450 (CSYRFTEMTG…RGFKATYVII (111 aa)). The tract at residues 461 to 491 (TLQTTPPSTTTLQTTNPSTTTLQTTNPSTTT) is disordered. 2 disulfide bridges follow: Cys-503-Cys-529 and Cys-556-Cys-576. In terms of domain architecture, CUB 2 spans 503–614 (CGGTFVGVEG…RGFVASYRAI (112 aa)).

The cofactor is Zn(2+). In terms of tissue distribution, asymmetrically along the animal-vegetal axis of the blastula.

The polypeptide is Protein SpAN (SPAN) (Strongylocentrotus purpuratus (Purple sea urchin)).